A 473-amino-acid chain; its full sequence is High-affinity proline transporter PutP (473 aa).

12 helical membrane passes run 32 to 52 (LSAGAADMSGWLLMGLPGAMF), 56 to 76 (LSGAWIVIGLCLGAWANWLYV), 114 to 134 (IVILVFFTFYVSSGMVSGGVL), 146 to 166 (GLWIVTGVVVAYTLFGGFLAV), 171 to 191 (FVQGIIMFAALILVPIVTFFH), 218 to 238 (VLGIISLFAWGLGYFGQPHII), 256 to 276 (IGMGWMILSAVGAVLTGLGGI), 299 to 319 (ILFHPIITGFLISAILAAIMS), 350 to 370 (LVFLGRLAVLAVSIVALVLAW), 376 to 396 (ILGLVSYAWAGFGASFGPVVL), 408 to 428 (GALAGMIVGAATVIIWANAGL), and 431 to 451 (FLYEMIPGFAASLLSVFFVSI).

It belongs to the sodium:solute symporter (SSF) (TC 2.A.21) family.

The protein resides in the cell membrane. The catalysed reaction is L-proline(in) + Na(+)(in) = L-proline(out) + Na(+)(out). Functionally, catalyzes the high-affinity uptake of extracellular proline. Important for the use of proline as a sole carbon and energy source or a sole nitrogen source. In Bacillus subtilis (strain 168), this protein is High-affinity proline transporter PutP.